A 130-amino-acid polypeptide reads, in one-letter code: Small ribosomal subunit protein uS8 (130 aa).

The protein belongs to the universal ribosomal protein uS8 family. In terms of assembly, part of the 30S ribosomal subunit. Contacts proteins S5 and S12.

In terms of biological role, one of the primary rRNA binding proteins, it binds directly to 16S rRNA central domain where it helps coordinate assembly of the platform of the 30S subunit. The protein is Small ribosomal subunit protein uS8 of Haemophilus ducreyi (strain 35000HP / ATCC 700724).